The chain runs to 489 residues: Ketol-acid reductoisomerase (NADP(+)) (489 aa).

Residues 17–208 (LGVCEFMEQS…GGHKAGVLRS (192 aa)) enclose the KARI N-terminal Rossmann domain. NADP(+) contacts are provided by residues 45–48 (CGAQ), arginine 68, arginine 76, serine 78, and 108–110 (DKQ). Histidine 132 is an active-site residue. Glycine 158 lines the NADP(+) pocket. KARI C-terminal knotted domains lie at 209-344 (SFVA…KTAP) and 345-485 (QEAP…MTAM). Residues aspartate 217, glutamate 221, glutamate 389, and glutamate 393 each coordinate Mg(2+). Serine 414 contacts substrate.

It belongs to the ketol-acid reductoisomerase family. Mg(2+) serves as cofactor.

It catalyses the reaction (2R)-2,3-dihydroxy-3-methylbutanoate + NADP(+) = (2S)-2-acetolactate + NADPH + H(+). The catalysed reaction is (2R,3R)-2,3-dihydroxy-3-methylpentanoate + NADP(+) = (S)-2-ethyl-2-hydroxy-3-oxobutanoate + NADPH + H(+). It functions in the pathway amino-acid biosynthesis; L-isoleucine biosynthesis; L-isoleucine from 2-oxobutanoate: step 2/4. The protein operates within amino-acid biosynthesis; L-valine biosynthesis; L-valine from pyruvate: step 2/4. Its function is as follows. Involved in the biosynthesis of branched-chain amino acids (BCAA). Catalyzes an alkyl-migration followed by a ketol-acid reduction of (S)-2-acetolactate (S2AL) to yield (R)-2,3-dihydroxy-isovalerate. In the isomerase reaction, S2AL is rearranged via a Mg-dependent methyl migration to produce 3-hydroxy-3-methyl-2-ketobutyrate (HMKB). In the reductase reaction, this 2-ketoacid undergoes a metal-dependent reduction by NADPH to yield (R)-2,3-dihydroxy-isovalerate. In Flavobacterium johnsoniae (strain ATCC 17061 / DSM 2064 / JCM 8514 / BCRC 14874 / CCUG 350202 / NBRC 14942 / NCIMB 11054 / UW101) (Cytophaga johnsonae), this protein is Ketol-acid reductoisomerase (NADP(+)).